The primary structure comprises 534 residues: Paired box protein Pax-1 (534 aa).

The paired DNA-binding region spans 98–224 (TYGEVNQLGG…SSISRILRNK (127 aa)). The interval 101-157 (EVNQLGGVFVNGRPLPNAIRLRIVELAQLGIRPCDISRQLRVSHGCVSKILARYNET) is PAI subdomain. The tract at residues 176–224 (NVVKHIRDYKQGDPGIFAWEIRDRLLADGVCDKYNVPSVSSISRILRNK) is RED subdomain. 2 disordered regions span residues 424 to 480 (PSRE…AAAP) and 492 to 511 (EEEA…QAQP).

Its subcellular location is the nucleus. This protein is a transcriptional activator. It may play a role in the formation of segmented structures of the embryo. May play an important role in the normal development of the vertebral column. In Homo sapiens (Human), this protein is Paired box protein Pax-1 (PAX1).